The sequence spans 466 residues: Fumarate hydratase class II (466 aa).

Substrate contacts are provided by residues 99–101 (SGT), 129–132 (HPND), 139–141 (SSN), and Thr-187. Residue His-188 is the Proton donor/acceptor of the active site. Residue Ser-318 is part of the active site. Substrate contacts are provided by residues Ser-319 and 324–326 (KVN).

Belongs to the class-II fumarase/aspartase family. Fumarase subfamily. In terms of assembly, homotetramer.

Its subcellular location is the cytoplasm. It carries out the reaction (S)-malate = fumarate + H2O. It participates in carbohydrate metabolism; tricarboxylic acid cycle; (S)-malate from fumarate: step 1/1. Functionally, involved in the TCA cycle. Catalyzes the stereospecific interconversion of fumarate to L-malate. In Thermus aquaticus, this protein is Fumarate hydratase class II.